A 760-amino-acid chain; its full sequence is Catalase-peroxidase (760 aa).

The disordered stretch occupies residues 1-22 (MSQGECPVKKVPNVAGSGTRNT). The tryptophyl-tyrosyl-methioninium (Trp-Tyr) (with M-268) cross-link spans 93–242 (WHSAGTYRVT…LAAAHMGLIY (150 aa)). The active-site Proton acceptor is the histidine 94. Residues 206–226 (KGEGIMDGDQHKTDKSEPHTS) form a disordered region. Residues 213 to 226 (GDQHKTDKSEPHTS) are compositionally biased toward basic and acidic residues. The segment at residues 242 to 268 (YVNPEGPEGIPDPVAAAHDIRTTFGRM) is a cross-link (tryptophyl-tyrosyl-methioninium (Tyr-Met) (with W-93)). Histidine 283 is a binding site for heme b.

Belongs to the peroxidase family. Peroxidase/catalase subfamily. As to quaternary structure, homodimer or homotetramer. Heme b is required as a cofactor. Post-translationally, formation of the three residue Trp-Tyr-Met cross-link is important for the catalase, but not the peroxidase activity of the enzyme.

It is found in the cytoplasm. The catalysed reaction is H2O2 + AH2 = A + 2 H2O. It carries out the reaction 2 H2O2 = O2 + 2 H2O. Functionally, bifunctional enzyme with both catalase and broad-spectrum peroxidase activity. The chain is Catalase-peroxidase from Pyrenophora tritici-repentis (strain Pt-1C-BFP) (Wheat tan spot fungus).